Consider the following 270-residue polypeptide: S-adenosylmethionine decarboxylase proenzyme (270 aa).

S117 serves as the catalytic Schiff-base intermediate with substrate; via pyruvic acid. The residue at position 117 (S117) is a Pyruvic acid (Ser); by autocatalysis. Catalysis depends on H122, which acts as the Proton acceptor; for processing activity. C145 (proton donor; for catalytic activity) is an active-site residue.

It belongs to the prokaryotic AdoMetDC family. Type 2 subfamily. Heterooctamer of four alpha and four beta chains arranged as a tetramer of alpha/beta heterodimers. Requires pyruvate as cofactor. Is synthesized initially as an inactive proenzyme. Formation of the active enzyme involves a self-maturation process in which the active site pyruvoyl group is generated from an internal serine residue via an autocatalytic post-translational modification. Two non-identical subunits are generated from the proenzyme in this reaction, and the pyruvate is formed at the N-terminus of the alpha chain, which is derived from the carboxyl end of the proenzyme. The post-translation cleavage follows an unusual pathway, termed non-hydrolytic serinolysis, in which the side chain hydroxyl group of the serine supplies its oxygen atom to form the C-terminus of the beta chain, while the remainder of the serine residue undergoes an oxidative deamination to produce ammonia and the pyruvoyl group blocking the N-terminus of the alpha chain.

The catalysed reaction is S-adenosyl-L-methionine + H(+) = S-adenosyl 3-(methylsulfanyl)propylamine + CO2. It participates in amine and polyamine biosynthesis; S-adenosylmethioninamine biosynthesis; S-adenosylmethioninamine from S-adenosyl-L-methionine: step 1/1. Catalyzes the decarboxylation of S-adenosylmethionine to S-adenosylmethioninamine (dcAdoMet), the propylamine donor required for the synthesis of the polyamines spermine and spermidine from the diamine putrescine. The protein is S-adenosylmethionine decarboxylase proenzyme of Pseudoalteromonas translucida (strain TAC 125).